A 470-amino-acid chain; its full sequence is Cysteine--tRNA ligase (470 aa).

Cys-28 contributes to the Zn(2+) binding site. The short motif at 30–40 (PTVYNYIHIGN) is the 'HIGH' region element. 3 residues coordinate Zn(2+): Cys-212, His-237, and Glu-241. A 'KMSKS' region motif is present at residues 271 to 275 (KMSKS). Lys-274 is an ATP binding site.

Belongs to the class-I aminoacyl-tRNA synthetase family. Monomer. It depends on Zn(2+) as a cofactor.

The protein resides in the cytoplasm. It carries out the reaction tRNA(Cys) + L-cysteine + ATP = L-cysteinyl-tRNA(Cys) + AMP + diphosphate. This chain is Cysteine--tRNA ligase, found in Ligilactobacillus salivarius (strain UCC118) (Lactobacillus salivarius).